Reading from the N-terminus, the 93-residue chain is Small ribosomal subunit protein uS19 (93 aa).

Belongs to the universal ribosomal protein uS19 family.

Protein S19 forms a complex with S13 that binds strongly to the 16S ribosomal RNA. The chain is Small ribosomal subunit protein uS19 from Ehrlichia ruminantium (strain Welgevonden).